An 87-amino-acid polypeptide reads, in one-letter code: Small ribosomal subunit protein uS15c (87 aa).

Belongs to the universal ribosomal protein uS15 family. As to quaternary structure, part of the 30S ribosomal subunit.

It is found in the plastid. The protein localises to the chloroplast. The chain is Small ribosomal subunit protein uS15c (rps15) from Nicotiana tabacum (Common tobacco).